The sequence spans 134 residues: Large ribosomal subunit protein uL22 (134 aa).

Belongs to the universal ribosomal protein uL22 family. In terms of assembly, part of the 50S ribosomal subunit.

Its function is as follows. This protein binds specifically to 23S rRNA; its binding is stimulated by other ribosomal proteins, e.g. L4, L17, and L20. It is important during the early stages of 50S assembly. It makes multiple contacts with different domains of the 23S rRNA in the assembled 50S subunit and ribosome. In terms of biological role, the globular domain of the protein is located near the polypeptide exit tunnel on the outside of the subunit, while an extended beta-hairpin is found that lines the wall of the exit tunnel in the center of the 70S ribosome. The chain is Large ribosomal subunit protein uL22 from Rhodococcus jostii (strain RHA1).